A 490-amino-acid chain; its full sequence is Dipeptide and tripeptide permease A (490 aa).

Residues methionine 1 to arginine 34 are Cytoplasmic-facing. A helical membrane pass occupies residues phenylalanine 35 to threonine 55. The Periplasmic segment spans residues glutamate 56–serine 59. A helical transmembrane segment spans residues isoleucine 60–leucine 80. Over glycine 81–arginine 89 the chain is Cytoplasmic. A helical transmembrane segment spans residues valine 90–histidine 110. Residue aspartate 111 is a topological domain, periplasmic. The helical transmembrane segment at leucine 112–asparagine 132 threads the bilayer. At proline 133–threonine 153 the chain is on the cytoplasmic side. Residues methionine 154–alanine 174 traverse the membrane as a helical segment. Residues alanine 175–arginine 176 lie on the Periplasmic side of the membrane. The chain crosses the membrane as a helical span at residues phenylalanine 177–phenylalanine 197. Over methionine 198–glutamine 217 the chain is Cytoplasmic. The chain crosses the membrane as a helical span at residues valine 218–leucine 238. Over leucine 239 to arginine 246 the chain is Periplasmic. The helical transmembrane segment at tryptophan 247 to leucine 267 threads the bilayer. The Cytoplasmic segment spans residues glutamine 268–lysine 274. A helical membrane pass occupies residues methionine 275–methionine 295. The Periplasmic segment spans residues proline 296–glutamine 320. A helical transmembrane segment spans residues tyrosine 321–asparagine 341. Residues lysine 342 to lysine 352 are Cytoplasmic-facing. A helical transmembrane segment spans residues phenylalanine 353–phenylalanine 373. Topologically, residues alanine 374 to asparagine 383 are periplasmic. Residues tryptophan 384–leucine 404 traverse the membrane as a helical segment. The Cytoplasmic portion of the chain corresponds to alanine 405–arginine 414. The chain crosses the membrane as a helical span at residues leucine 415–glycine 435. At lysine 436–histidine 460 the chain is on the periplasmic side. The helical transmembrane segment at valine 461–proline 481 threads the bilayer. At lysine 482–aspartate 490 the chain is on the cytoplasmic side.

It belongs to the major facilitator superfamily. Proton-dependent oligopeptide transporter (POT/PTR) (TC 2.A.17) family. DtpA subfamily.

It localises to the cell inner membrane. Functionally, proton-dependent permease that transports di- and tripeptides. This chain is Dipeptide and tripeptide permease A, found in Edwardsiella piscicida.